The chain runs to 346 residues: Zinc finger CCCH domain-containing protein 28 (346 aa).

The tract at residues 1 to 99 is disordered; sequence MASAETPNPD…SPRYPDGKRR (99 aa). Residues 17–41 are compositionally biased toward low complexity; it reads DAAAAADPAAAAPAAAATDPAAAGS. Residues 62-86 show a composition bias toward basic residues; sequence RSSRSRSRSPRRGRSRSRSRSRSRG. C3H1-type zinc fingers lie at residues 103–131, 138–165, 181–209, 211–237, 282–308, and 314–340; these read DLNV…HPHP, DSKV…HPPP, KVKM…HHSP, EDCA…HVMA, NYGV…HPDL, and NTQV…HPPA.

This is Zinc finger CCCH domain-containing protein 28 from Oryza sativa subsp. japonica (Rice).